We begin with the raw amino-acid sequence, 117 residues long: MNIIEQLDKEQMAAREAKIPEFGPGDTVTVQVWVKEGGRERLQAFEGVVIAKRNRGINSAFTVRKVSHGEGVERVFQTYSPIIESVKVKRRGDVRRAKLYYLRERSGKSARIKEKVK.

The protein belongs to the bacterial ribosomal protein bL19 family.

This protein is located at the 30S-50S ribosomal subunit interface and may play a role in the structure and function of the aminoacyl-tRNA binding site. The chain is Large ribosomal subunit protein bL19 from Alkalilimnicola ehrlichii (strain ATCC BAA-1101 / DSM 17681 / MLHE-1).